The sequence spans 161 residues: DNA-directed RNA polymerase 18 kDa subunit (161 aa).

Belongs to the poxviridae DNA-directed RNA polymerase 18 kDa subunit family. The DNA-dependent RNA polymerase used for intermediate and late genes expression consists of eight subunits Rpo30/OPG66, Rpo7/OPG90, Rpo22/OPG103, Rpo147/OPG105, Rpo18/OPG119, Rpo19/OPG131, Rpo132/OPG151 and Rpo35/OPG156. The same holoenzyme, with the addition of the transcription-specificity factor OPG109, is used for early gene expression. In terms of processing, apparently non-glycosylated.

It localises to the virion. It carries out the reaction RNA(n) + a ribonucleoside 5'-triphosphate = RNA(n+1) + diphosphate. In terms of biological role, part of the DNA-dependent RNA polymerase which catalyzes the transcription of viral DNA into RNA using the four ribonucleoside triphosphates as substrates. Responsible for the transcription of early, intermediate and late genes. DNA-dependent RNA polymerase associates with the early transcription factor (ETF), itself composed of OPG118 and OPG133, thereby allowing the early genes transcription. Late transcription, and probably also intermediate transcription, require newly synthesized RNA polymerase. This Cynomys gunnisoni (Gunnison's prairie dog) protein is DNA-directed RNA polymerase 18 kDa subunit (OPG119).